We begin with the raw amino-acid sequence, 156 residues long: ATP synthase subunit b 2 (156 aa).

The helical transmembrane segment at leucine 11–glycine 31 threads the bilayer.

Belongs to the ATPase B chain family. As to quaternary structure, F-type ATPases have 2 components, F(1) - the catalytic core - and F(0) - the membrane proton channel. F(1) has five subunits: alpha(3), beta(3), gamma(1), delta(1), epsilon(1). F(0) has three main subunits: a(1), b(2) and c(10-14). The alpha and beta chains form an alternating ring which encloses part of the gamma chain. F(1) is attached to F(0) by a central stalk formed by the gamma and epsilon chains, while a peripheral stalk is formed by the delta and b chains.

It is found in the cell inner membrane. Functionally, f(1)F(0) ATP synthase produces ATP from ADP in the presence of a proton or sodium gradient. F-type ATPases consist of two structural domains, F(1) containing the extramembraneous catalytic core and F(0) containing the membrane proton channel, linked together by a central stalk and a peripheral stalk. During catalysis, ATP synthesis in the catalytic domain of F(1) is coupled via a rotary mechanism of the central stalk subunits to proton translocation. Component of the F(0) channel, it forms part of the peripheral stalk, linking F(1) to F(0). The protein is ATP synthase subunit b 2 of Pseudoalteromonas atlantica (strain T6c / ATCC BAA-1087).